Consider the following 279-residue polypeptide: MMQWSAILIRTCFSGSGGEALTCATSEQQTRPELCFFFSVRSSWPSTISDGACLALVSAEQGATAGRNTLSLRSMMATEDMATSTRSLRSQATNVDDDANVSIENRGMNPSVLTKLGEFASTLTAGNTANKLWLMADVDPKSAFKLLGLDMPGVRFIDNPKMLQWLKFTKAYLDMKKSGFGETSAHALLYEKIGGPDLSLLLLSLKDAPDANSLVQKLTNSQFGMWHDARIEPEQLAQTVFKIQDVRKLPKNDPKLQVIDDYAKYHRKHRKFLNSIMII.

A signal peptide spans 1-20 (MMQWSAILIRTCFSGSGGEA). The RxLR-dEER motif lies at 86-106 (RSLRSQATNVDDDANVSIENR). A glycan (N-linked (GlcNAc...) asparagine) is linked at asparagine 100. The tract at residues 129–147 (ANKLWLMADVDPKSAFKLL) is W1 motif. The Y1 motif stretch occupies residues 153-174 (GVRFIDNPKMLQWLKFTKAYLD). The interval 178–208 (SGFGETSAHALLYEKIGGPDLSLLLLSLKDA) is l motif. The segment at 222–240 (QFGMWHDARIEPEQLAQTV) is W2 motif. The tract at residues 250 to 271 (PKNDPKLQVIDDYAKYHRKHRK) is Y2 motif.

This sequence belongs to the RxLR effector family.

Its subcellular location is the secreted. It localises to the host cell. Its function is as follows. Effector that suppresses the host mitogen-activated protein kinase (MAPK)-based plant defense activated by the Phytophthora elicitor to promote colonization of the Phytophthora pathogen. Neither directly inhibits MAPK kinase activity nor interacts with MAPK proteins but acts downstream by suppressing transcriptional activation of resistance marker genes such as FRK1, WRKY22 and WRKY29. Confers avirulence in the presence of resistance protein Rps1k in host. This Phytophthora sojae (strain P6497) (Soybean stem and root rot agent) protein is RxLR effector protein Avh331.